The primary structure comprises 323 residues: HPr kinase/phosphorylase (323 aa).

Residues His146 and Lys167 contribute to the active site. Position 161–168 (161–168 (GESGLGKS)) interacts with ATP. Residue Ser168 participates in Mg(2+) binding. The Proton acceptor; for phosphorylation activity. Proton donor; for dephosphorylation activity role is filled by Asp185. The segment at 209–218 (LEVRGLGLLD) is important for the catalytic mechanism of both phosphorylation and dephosphorylation. A Mg(2+)-binding site is contributed by Glu210. The active site involves Arg250. The important for the catalytic mechanism of dephosphorylation stretch occupies residues 271 to 276 (QVAAGR).

Belongs to the HPrK/P family. In terms of assembly, homohexamer. Mg(2+) is required as a cofactor.

It carries out the reaction [HPr protein]-L-serine + ATP = [HPr protein]-O-phospho-L-serine + ADP + H(+). The catalysed reaction is [HPr protein]-O-phospho-L-serine + phosphate + H(+) = [HPr protein]-L-serine + diphosphate. Its function is as follows. Catalyzes the ATP- as well as the pyrophosphate-dependent phosphorylation of a specific serine residue in HPr, a phosphocarrier protein of the phosphoenolpyruvate-dependent sugar phosphotransferase system (PTS). HprK/P also catalyzes the pyrophosphate-producing, inorganic phosphate-dependent dephosphorylation (phosphorolysis) of seryl-phosphorylated HPr (P-Ser-HPr). The chain is HPr kinase/phosphorylase from Cupriavidus necator (strain ATCC 17699 / DSM 428 / KCTC 22496 / NCIMB 10442 / H16 / Stanier 337) (Ralstonia eutropha).